Consider the following 485-residue polypeptide: Aspartyl protease family protein 2 (485 aa).

A signal peptide spans 1-23; it reads MVGRRKALLFSLCFFFLSLPSFS. The disordered stretch occupies residues 43-71; it reads PVSFQPDSDSESLLESEFESGSDSESSSS. The span at 50 to 64 shows a compositional bias: acidic residues; the sequence is SDSESLLESEFESGS. The Peptidase A1 domain occupies 142 to 480; the sequence is YFTRLGVGTP…DLASSRVGFA (339 aa). Residues aspartate 160 and aspartate 365 contribute to the active site.

This sequence belongs to the peptidase A1 family.

Functionally, aspartyl protease. Not able to cleave BAG6. The chain is Aspartyl protease family protein 2 from Arabidopsis thaliana (Mouse-ear cress).